The sequence spans 238 residues: Ribonuclease PH (238 aa).

Phosphate contacts are provided by residues R86 and 124 to 126; that span reads GTR.

This sequence belongs to the RNase PH family. In terms of assembly, homohexameric ring arranged as a trimer of dimers.

It carries out the reaction tRNA(n+1) + phosphate = tRNA(n) + a ribonucleoside 5'-diphosphate. Functionally, phosphorolytic 3'-5' exoribonuclease that plays an important role in tRNA 3'-end maturation. Removes nucleotide residues following the 3'-CCA terminus of tRNAs; can also add nucleotides to the ends of RNA molecules by using nucleoside diphosphates as substrates, but this may not be physiologically important. Probably plays a role in initiation of 16S rRNA degradation (leading to ribosome degradation) during starvation. The sequence is that of Ribonuclease PH from Chromobacterium violaceum (strain ATCC 12472 / DSM 30191 / JCM 1249 / CCUG 213 / NBRC 12614 / NCIMB 9131 / NCTC 9757 / MK).